We begin with the raw amino-acid sequence, 312 residues long: 2,3-dihydroxyphenylpropionate/2,3-dihydroxicinnamic acid 1,2-dioxygenase 1 (312 aa).

His115 functions as the Proton donor in the catalytic mechanism. His179 functions as the Proton acceptor in the catalytic mechanism.

Belongs to the LigB/MhpB extradiol dioxygenase family. As to quaternary structure, homotetramer. Fe(2+) serves as cofactor.

It catalyses the reaction 3-(2,3-dihydroxyphenyl)propanoate + O2 = (2Z,4E)-2-hydroxy-6-oxonona-2,4-dienedioate + H(+). It carries out the reaction (2E)-3-(2,3-dihydroxyphenyl)prop-2-enoate + O2 = (2Z,4E,7E)-2-hydroxy-6-oxonona-2,4,7-trienedioate + H(+). It participates in aromatic compound metabolism; 3-phenylpropanoate degradation. Functionally, catalyzes the non-heme iron(II)-dependent oxidative cleavage of 2,3-dihydroxyphenylpropionic acid and 2,3-dihydroxicinnamic acid into 2-hydroxy-6-ketononadienedioate and 2-hydroxy-6-ketononatrienedioate, respectively. The protein is 2,3-dihydroxyphenylpropionate/2,3-dihydroxicinnamic acid 1,2-dioxygenase 1 of Dechloromonas aromatica (strain RCB).